The sequence spans 1516 residues: EF-hand calcium-binding domain-containing protein 6 (1516 aa).

The tract at residues 1 to 23 is disordered; sequence MKRNGTRLNFAKANSTKSGSTRA. A compositionally biased stretch (polar residues) spans 12–21; it reads KANSTKSGST. EF-hand domains are found at residues 96 to 131, 197 to 232, 321 to 356, 444 to 462, and 528 to 563; these read SRRDDIKKVFQILDRNHNQMVTKGDLKRVITAFLIP, RNMRSIRKVFQVMDVNNTGLVQPQELRRVLETFCLR, KSYEKIEKALSAGDPSKGGYISLNYLKVVLDTFIYR, SGHITWEELRHILNCMVAK, and RNLQAFYSMLQSYDLRDTGTIGKNNFRKVMRVFCPY. 9 residues coordinate Ca(2+): Asp109, Asn111, Asn113, Met115, Asp120, Asp210, Asn212, Thr214, and Glu221. A disordered region spans residues 618–638; that stretch reads EEPGQQDERTQPSGEKTSEIN. The segment covering 628–638 has biased composition (polar residues); the sequence is QPSGEKTSEIN. EF-hand domains follow at residues 674–690, 763–798, 905–940, 1086–1121, 1193–1228, and 1229–1264; these read KINQEEFRKVLERSGMP, ESFRDVYSAFFRIDLDRDGIISMHDFHRLLQYLQLN, LTPREFEKLWQNYDTEGRGYITYQEFLHRLGIRYSP, SSQPALVEAFSALDKEDTGFVKAMEFGDVLRSVCQK, SHYHTIVQEFENFDTLKSNTVSRDEFRSICTRHIQI, and LTDEQFDRLWSELPVNAKGRLKYQDFLSKLSIERVP. Asp776, Asp778, Asp780, and Asp787 together coordinate Ca(2+). A Phosphothreonine modification is found at Thr906. The interval 1263–1318 is disordered; sequence VPSPPMAAGDSGESTMAQRGSSAPEFSQGTRSNLYSPPRDSRVGLKSRSHPCTPVG. Position 1265 is a phosphoserine (Ser1265). The segment covering 1274–1297 has biased composition (polar residues); that stretch reads GESTMAQRGSSAPEFSQGTRSNLY. Ser1311 carries the post-translational modification Phosphoserine. 2 positions are modified to phosphothreonine: Thr1315 and Thr1319. An interaction with PARK7 region spans residues 1318 to 1516; that stretch reads GTPPLQNCEP…YNDFLRAFLQ (199 aa). EF-hand domains follow at residues 1348-1373, 1374-1409, 1454-1484, and 1485-1516; these read KEKDTDKQGTISAAEFLALVEKFKLD, ISREESQQLIVKYDLKNNGKFAYCDFIQSCVLLLKA, MRRSFKTYDKNGTGLLSVADFRKVLRQYSIN, and LSEEEFFHVLEYYDKSLSSKISYNDFLRAFLQ. The interval 1422–1516 is interaction with AR; sequence NADKMKEAGM…YNDFLRAFLQ (95 aa). Asp1462, Asn1464, Thr1466, and Asp1473 together coordinate Ca(2+).

Microtubule inner protein component of sperm flagellar doublet microtubules. Binds PARK7. Part of a ternary complex containing PARK7, EFCAB6/DJBP and AR.

Its subcellular location is the nucleus. It is found in the cytoplasm. It localises to the cytoskeleton. The protein localises to the flagellum axoneme. In terms of biological role, negatively regulates the androgen receptor by recruiting histone deacetylase complex, and protein DJ-1 antagonizes this inhibition by abrogation of this complex. Microtubule inner protein (MIP) part of the dynein-decorated doublet microtubules (DMTs) in cilia axoneme, which is required for motile cilia beating. The polypeptide is EF-hand calcium-binding domain-containing protein 6 (Efcab6) (Mus musculus (Mouse)).